We begin with the raw amino-acid sequence, 121 residues long: MAKKKKTVASNGIAHIHATSNNSIITITDINGNAITWSSSGAIGYKGAKKKTPYSAGVAAEKAAKEAMAMGLSTIKIYVNGVGRGKETAIRSLAACGLTITEIHDVTPIPHNGCRPPKKPR.

It belongs to the universal ribosomal protein uS11 family. In terms of assembly, part of the 30S ribosomal subunit. Interacts with proteins S7 and S18. Binds to IF-3.

Its function is as follows. Located on the platform of the 30S subunit, it bridges several disparate RNA helices of the 16S rRNA. Forms part of the Shine-Dalgarno cleft in the 70S ribosome. The sequence is that of Small ribosomal subunit protein uS11 from Mycoplasmoides gallisepticum (strain R(low / passage 15 / clone 2)) (Mycoplasma gallisepticum).